The sequence spans 320 residues: Histidine decarboxylase proenzyme (320 aa).

Residues 2-11 constitute a propeptide that is removed on maturation; it reads NKNLEANRNR. The residue at position 98 (Ser98) is a Pyruvic acid (Ser). The Proton donor role is filled by Glu215.

In terms of assembly, the proenzyme is a hexamer of identical pi chains; each pi chain monomer is cleaved to form a small (or beta) chain and a large (or alpha) chain by non-hydrolytic self-catalysis. Pyruvate serves as cofactor.

It catalyses the reaction L-histidine + H(+) = histamine + CO2. The protein is Histidine decarboxylase proenzyme (hdc) of Clostridium perfringens (strain ATCC 13124 / DSM 756 / JCM 1290 / NCIMB 6125 / NCTC 8237 / Type A).